Consider the following 60-residue polypeptide: Large ribosomal subunit protein uL30 (60 aa).

Belongs to the universal ribosomal protein uL30 family. In terms of assembly, part of the 50S ribosomal subunit.

This Lactobacillus johnsonii (strain CNCM I-12250 / La1 / NCC 533) protein is Large ribosomal subunit protein uL30.